A 339-amino-acid polypeptide reads, in one-letter code: MLDKRAQILLKTLIEHYISDGQPVGSRKLSVASGLDLSPASIRNIMSELEDHGFIASPHTSAGRIPTQRGYRLFVDTLLTVQPLQNQEIRKLENVLSSPDPQELINKAAELLSSLTHFAGLVMIPKRQGAAFRHLEFLPLSEKRILVIIVTTDGAVQNRIILAEKPYSASDLTQASNFFNQHYAGNTLDEVKQKLHEELKQMQSDMTRLMAAALEASSKTADNKDGVVIAGKRNLLDVQDLSTNVSSLRKLFEMFEHRTSLMQLLDQSQKASGVQIFIGGESGYLPLDECSMVTAPYETNGQTIGTLGVIGPTRMAYERVIPIVDITAKLLSNALSNNH.

Belongs to the HrcA family.

Negative regulator of class I heat shock genes (grpE-dnaK-dnaJ and groELS operons). Prevents heat-shock induction of these operons. The polypeptide is Heat-inducible transcription repressor HrcA (Methylobacillus flagellatus (strain ATCC 51484 / DSM 6875 / VKM B-1610 / KT)).